The following is a 146-amino-acid chain: Large ribosomal subunit protein uL11 (146 aa).

It belongs to the universal ribosomal protein uL11 family. As to quaternary structure, part of the ribosomal stalk of the 50S ribosomal subunit. Interacts with L10 and the large rRNA to form the base of the stalk. L10 forms an elongated spine to which L12 dimers bind in a sequential fashion forming a multimeric L10(L12)X complex. One or more lysine residues are methylated.

Functionally, forms part of the ribosomal stalk which helps the ribosome interact with GTP-bound translation factors. The chain is Large ribosomal subunit protein uL11 from Buchnera aphidicola subsp. Baizongia pistaciae (strain Bp).